The sequence spans 130 residues: Small ribosomal subunit protein uS8 (130 aa).

Belongs to the universal ribosomal protein uS8 family. Part of the 30S ribosomal subunit. Contacts proteins S5 and S12.

In terms of biological role, one of the primary rRNA binding proteins, it binds directly to 16S rRNA central domain where it helps coordinate assembly of the platform of the 30S subunit. The polypeptide is Small ribosomal subunit protein uS8 (Shewanella sediminis (strain HAW-EB3)).